We begin with the raw amino-acid sequence, 780 residues long: Translation initiation factor IF-2 (780 aa).

The disordered stretch occupies residues 24–194; it reads AEEKGFPVKN…KGAPERKNKA (171 aa). Composition is skewed to polar residues over residues 59–71 and 80–90; these read EQSAASAQPQRKV and QGTARTQTTAQ. Low complexity-rich tracts occupy residues 98-114 and 132-158; these read NQTQRNNNNKNNGQTGN and NNNTNNSNGRRNSNNSNSRGGRNSRNN. The segment covering 159 to 176 has biased composition (basic residues); sequence RNNRRRNNNNNNRYKKNQ. Positions 177-194 are enriched in basic and acidic residues; the sequence is RIKDTNQHKGAPERKNKA. The tr-type G domain occupies 281-450; the sequence is PRAPVVTIMG…LLQSDVLELK (170 aa). The tract at residues 290-297 is G1; the sequence is GHVDHGKT. 290-297 contacts GTP; it reads GHVDHGKT. Residues 315 to 319 are G2; it reads GITQA. The segment at 336 to 339 is G3; the sequence is DTPG. Residues 336 to 340 and 390 to 393 each bind GTP; these read DTPGH and NKID. Residues 390-393 are G4; that stretch reads NKID. Positions 426 to 428 are G5; that stretch reads SAK.

It belongs to the TRAFAC class translation factor GTPase superfamily. Classic translation factor GTPase family. IF-2 subfamily.

It localises to the cytoplasm. Functionally, one of the essential components for the initiation of protein synthesis. Protects formylmethionyl-tRNA from spontaneous hydrolysis and promotes its binding to the 30S ribosomal subunits. Also involved in the hydrolysis of GTP during the formation of the 70S ribosomal complex. This Levilactobacillus brevis (strain ATCC 367 / BCRC 12310 / CIP 105137 / JCM 1170 / LMG 11437 / NCIMB 947 / NCTC 947) (Lactobacillus brevis) protein is Translation initiation factor IF-2.